The chain runs to 221 residues: Putative N-acetylmannosamine-6-phosphate 2-epimerase (221 aa).

Belongs to the NanE family.

It catalyses the reaction an N-acyl-D-glucosamine 6-phosphate = an N-acyl-D-mannosamine 6-phosphate. The protein operates within amino-sugar metabolism; N-acetylneuraminate degradation; D-fructose 6-phosphate from N-acetylneuraminate: step 3/5. Converts N-acetylmannosamine-6-phosphate (ManNAc-6-P) to N-acetylglucosamine-6-phosphate (GlcNAc-6-P). In Clostridium perfringens (strain SM101 / Type A), this protein is Putative N-acetylmannosamine-6-phosphate 2-epimerase.